The sequence spans 495 residues: Sialin (495 aa).

Residues 1–18 show a composition bias toward basic and acidic residues; it reads MRSPVRDLARNDGEESTD. Positions 1 to 24 are disordered; the sequence is MRSPVRDLARNDGEESTDRTPLLP. Residues 1 to 41 are Cytoplasmic-facing; it reads MRSPVRDLARNDGEESTDRTPLLPGAPRAEAAPVCCSARYN. Ser3 is subject to Phosphoserine. The Dileucine internalization motif motif lies at 22-23; sequence LL. Residues 42–62 traverse the membrane as a helical segment; it reads LAILAFFGFFIVYALRVNLSV. Residues 63–109 are Lumenal-facing; the sequence is ALVDMVDSNTTLEDNRTSKACPEHSAPIKVHHNQTGKKYQWDAETQG. Residues Asn71, Asn77, and Asn95 are each glycosylated (N-linked (GlcNAc...) asparagine). Residues 110–130 form a helical membrane-spanning segment; that stretch reads WILGSFFYGYIITQIPGGYVA. The Cytoplasmic portion of the chain corresponds to 131 to 136; sequence SKIGGK. A helical membrane pass occupies residues 137-157; it reads MLLGFGILGTAVLTLFTPIAA. Position 158 (Asp158) is a topological domain, lumenal. Residues 159-179 traverse the membrane as a helical segment; sequence LGVGPLIVLRALEGLGEGVTF. Residues 180–200 are Cytoplasmic-facing; that stretch reads PAMHAMWSSWAPPLERSKLLS. Residues 201–221 traverse the membrane as a helical segment; it reads ISYAGAQLGTVISLPLSGIIC. Residues 222 to 227 lie on the Lumenal side of the membrane; the sequence is YYMNWT. The chain crosses the membrane as a helical span at residues 228-248; sequence YVFYFFGTIGIFWFLLWIWLV. At 249–279 the chain is on the cytoplasmic side; the sequence is SDTPQKHKRISHYEKEYILSSLRNQLSSQKS. A helical membrane pass occupies residues 280–300; the sequence is VPWVPILKSLPLWAIVVAHFS. Residues 301–328 lie on the Lumenal side of the membrane; it reads YNWTFYTLLTLLPTYMKEILRFNVQENG. Residues 329-349 traverse the membrane as a helical segment; that stretch reads FLSSLPYLGSWLCMILSGQAA. Topologically, residues 350 to 365 are cytoplasmic; the sequence is DNLRAKWNFSTLCVRR. Residues 366–386 traverse the membrane as a helical segment; it reads IFSLIGMIGPAVFLVAAGFIG. Over 387 to 391 the chain is Lumenal; it reads CDYSL. A helical transmembrane segment spans residues 392–412; it reads AVAFLTISTTLGGFCSSGFSI. The Cytoplasmic segment spans residues 413-423; sequence NHLDIAPSYAG. The helical transmembrane segment at 424-444 threads the bilayer; that stretch reads ILLGITNTFATIPGMVGPVIA. Residues 445-457 lie on the Lumenal side of the membrane; it reads KSLTPDNTVGEWQ. Residues 458–478 form a helical membrane-spanning segment; that stretch reads TVFYIAAAINVFGAIFFTLFA. The Cytoplasmic segment spans residues 479 to 495; that stretch reads KGEVQNWALNDHHGHRH.

The protein belongs to the major facilitator superfamily. Sodium/anion cotransporter family. In the adult, detected in placenta, kidney and pancreas. Abundant in the endothelial cells of tumors from ovary, colon, breast and lung, but is not detected in endothelial cells from the corresponding normal tissues. Highly expressed in salivary glands and liver, with lower levels of expression in brain, spleen kidney, muscle and pancreas. Expressed in acinar cells of salivary glands (at protein level).

It is found in the basolateral cell membrane. It localises to the cytoplasmic vesicle. The protein resides in the secretory vesicle. Its subcellular location is the synaptic vesicle membrane. The protein localises to the lysosome membrane. The enzyme catalyses N-acetylneuraminate(in) + H(+)(in) = N-acetylneuraminate(out) + H(+)(out). It carries out the reaction D-glucuronate(out) + H(+)(out) = D-glucuronate(in) + H(+)(in). It catalyses the reaction 2 nitrate(out) + H(+)(out) = 2 nitrate(in) + H(+)(in). The catalysed reaction is L-aspartate(out) = L-aspartate(in). The enzyme catalyses L-glutamate(out) = L-glutamate(in). It carries out the reaction N-acetyl-L-aspartyl-L-glutamate(out) = N-acetyl-L-aspartyl-L-glutamate(in). Functionally, multifunctional anion transporter that operates via two distinct transport mechanisms, namely proton-coupled anion cotransport and membrane potential-dependent anion transport. Electroneutral proton-coupled acidic monosaccharide symporter, with a sugar to proton stoichiometry of 1:1. Exports glucuronic acid and free sialic acid derived from sialoglycoconjugate degradation out of lysosomes, driven by outwardly directed lysosomal pH gradient. May regulate lysosome function and metabolism of sialylated conjugates that impact oligodendrocyte lineage differentiation and myelinogenesis in the central nervous system. Electrogenic proton-coupled nitrate symporter that transports nitrate ions across the basolateral membrane of salivary gland acinar cells, with nitrate to proton stoichiometry of 2:1. May contribute to nitrate clearance from serum by salivary glands, where it is further concentrated and secreted in the saliva. Uses membrane potential to drive the uptake of acidic amino acids and peptides into synaptic vesicles. Responsible for synaptic vesicular storage of L-aspartate and L-glutamate in pinealocytes as well as vesicular uptake of N-acetyl-L-aspartyl-L-glutamate neuropeptide, relevant to aspartegic-associated glutamatergic neurotransmission and activation of metabotropic receptors that inhibit subsequent transmitter release. Its function is as follows. Receptor for CM101, a polysaccharide produced by group B Streptococcus with antipathoangiogenic properties. The chain is Sialin (SLC17A5) from Homo sapiens (Human).